The primary structure comprises 268 residues: Short chain dehydrogenase/reductase dpchG (268 aa).

Residues V18, D70, N97, K131, Y165, and K169 each contribute to the NADP(+) site. Y165 (proton acceptor) is an active-site residue. K169 serves as the catalytic Lowers pKa of active site Tyr.

Belongs to the short-chain dehydrogenases/reductases (SDR) family.

The protein operates within secondary metabolite biosynthesis; terpenoid biosynthesis. Short chain dehydrogenase/reductase; part of the gene cluster that mediates the biosynthesis of the diterpenoid pyrones higginsianins A and B. The first step of the pathway is the synthesis of the alpha-pyrone moiety by the polyketide synthase dpchA via condensation of one acetyl-CoA starter unit with 3 malonyl-CoA units and 2 methylations. The alpha-pyrone is then combined with geranylgeranyl pyrophosphate (GGPP) formed by the GGPP synthase dpchD through the action of the prenyltransferase dpchC to yield a linear alpha-pyrone diterpenoid. Subsequent steps in the diterpenoid pyrone biosynthetic pathway involve the decalin core formation, which is initiated by the epoxidation of the C10-C11 olefin by the FAD-dependent oxidoreductase dpchE, and is followed by a cyclization cascade catalyzed by the terpene cyclase dpchB. The short chain dehydrogenase/reductase dpchG then oxidizes the 8S hydroxy group to a ketone and the short chain dehydrogenase/reductase dpchH reduces the ketone to the 8R hydroxy group to yield higginsianin B. Finally, the FAD-dependent oxidoreductase dpchF converts higginsianin B into higginsianin A. This Colletotrichum higginsianum (strain IMI 349063) (Crucifer anthracnose fungus) protein is Short chain dehydrogenase/reductase dpchG.